Reading from the N-terminus, the 429-residue chain is MSMKAPRGTVDLLPEQSIKWQFAESKIKEICHNYHYQEIRTPLFEHTEVFQRGVGDTTDIVQKEMYTFEDRGGRSLTLRPEGTASVARAYVENKLFGSPNQPTKLFYFGSMFRYERPQKGRMRQLNQFGTEVIGSEDPAVDAEVMDFAMNIYKSLGLKSVKLVINSLGDQESRESHRNALIQHFEPHREELCHDCQNRLDKNPLRVLDCKKDRDHPAMGTAPKITDFLNEYSKTYFADVMTYLDALDIEYVVDPNLVRGLDYYNHTAFEIMSEAEGFGAITTLAGGGRYNGLVEEFGGPSSPGIGFGMGLERLIMALEAENITLPIDQQLDCFVANMGDESKLEATKVVKRLRDNGIQADMDYQKRKMKGQLKAADRYQSKFVIFLGDDEIEKQEVTLKEMSTGDQSEVSMSQLVEVLQEKLNGGKIYE.

It belongs to the class-II aminoacyl-tRNA synthetase family. In terms of assembly, homodimer.

The protein localises to the cytoplasm. It catalyses the reaction tRNA(His) + L-histidine + ATP = L-histidyl-tRNA(His) + AMP + diphosphate + H(+). The polypeptide is Histidine--tRNA ligase (Oceanobacillus iheyensis (strain DSM 14371 / CIP 107618 / JCM 11309 / KCTC 3954 / HTE831)).